The primary structure comprises 89 residues: Small ribosomal subunit protein uS15 (89 aa).

Belongs to the universal ribosomal protein uS15 family. Part of the 30S ribosomal subunit. Forms a bridge to the 50S subunit in the 70S ribosome, contacting the 23S rRNA.

One of the primary rRNA binding proteins, it binds directly to 16S rRNA where it helps nucleate assembly of the platform of the 30S subunit by binding and bridging several RNA helices of the 16S rRNA. In terms of biological role, forms an intersubunit bridge (bridge B4) with the 23S rRNA of the 50S subunit in the ribosome. The polypeptide is Small ribosomal subunit protein uS15 (Clavibacter michiganensis subsp. michiganensis (strain NCPPB 382)).